Reading from the N-terminus, the 1071-residue chain is DNA-directed RNA polymerase subunit beta (1071 aa).

The protein belongs to the RNA polymerase beta chain family. In plastids the minimal PEP RNA polymerase catalytic core is composed of four subunits: alpha, beta, beta', and beta''. When a (nuclear-encoded) sigma factor is associated with the core the holoenzyme is formed, which can initiate transcription.

The protein localises to the plastid. Its subcellular location is the chloroplast. The catalysed reaction is RNA(n) + a ribonucleoside 5'-triphosphate = RNA(n+1) + diphosphate. Its function is as follows. DNA-dependent RNA polymerase catalyzes the transcription of DNA into RNA using the four ribonucleoside triphosphates as substrates. This chain is DNA-directed RNA polymerase subunit beta, found in Drimys granadensis.